A 300-amino-acid chain; its full sequence is Protein phosphatase 2C 1 (300 aa).

The 276-residue stretch at 23 to 298 folds into the PPM-type phosphatase domain; the sequence is IFAASEMQGW…DNMTTILVYL (276 aa). 4 residues coordinate Mn(2+): Asp57, Gly58, Asp237, and Asp289.

This sequence belongs to the PP2C family. The cofactor is Mg(2+). It depends on Mn(2+) as a cofactor. The N-terminus is blocked.

It is found in the membrane. The enzyme catalyses O-phospho-L-seryl-[protein] + H2O = L-seryl-[protein] + phosphate. It carries out the reaction O-phospho-L-threonyl-[protein] + H2O = L-threonyl-[protein] + phosphate. Functionally, serine and threonine phosphatase. The chain is Protein phosphatase 2C 1 from Paramecium tetraurelia.